The following is a 149-amino-acid chain: Large ribosomal subunit protein uL22 (149 aa).

It belongs to the universal ribosomal protein uL22 family. Part of the 50S ribosomal subunit.

Functionally, this protein binds specifically to 23S rRNA. It makes multiple contacts with different domains of the 23S rRNA in the assembled 50S subunit and ribosome. Its function is as follows. The globular domain of the protein is located near the polypeptide exit tunnel on the outside of the subunit, while an extended beta-hairpin is found that lines the wall of the exit tunnel in the center of the 70S ribosome. The polypeptide is Large ribosomal subunit protein uL22 (Picrophilus torridus (strain ATCC 700027 / DSM 9790 / JCM 10055 / NBRC 100828 / KAW 2/3)).